The chain runs to 129 residues: Serum amyloid A protein (129 aa).

Residues 1–18 form the signal peptide; sequence MKLFPGLLFCSLVLGVSG. Gln19 is subject to Pyrrolidone carboxylic acid. The disordered stretch occupies residues 92–129; that stretch reads GDSGHGAEDSKADQAANEWGRSGKDPNHFRPAGLPDKY. Positions 112-129 are cleaved as a propeptide — often cleaved during amyloidogenesis; sequence RSGKDPNHFRPAGLPDKY.

Belongs to the SAA family. In terms of processing, this protein is the precursor of amyloid protein A, which is formed by the removal of residues from the C-terminal end. In terms of tissue distribution, expressed by the liver; secreted in plasma.

It localises to the secreted. Functionally, major acute phase reactant. Apolipoprotein of the HDL complex. The polypeptide is Serum amyloid A protein (SAA1) (Canis lupus familiaris (Dog)).